The following is a 301-amino-acid chain: MDLALLRTFVTVHRAGSFTRAAALLGLSQPAVTSQIRTLERQLGRPLFLRQARGVTPTTIGDELAHRAAPHLDALVEIAESGLDDDSSSRTLYLAGPPEFTTERVLPALTGLTGDDGQGLTLRVSFGTAEETLEGLSCGRHDLAISTTRPRGALLSATPLCDEEHVLVAAPRWAERIGADTVRLKGAPALDDLPVVEVHESLPFVSRYWASVFDCAPAATGTVIVPDLRAVLSCASAGAGLAVLPRYLCARALEQGAVVTLLDPVVPPLRTYFLVVRTGTLALPHVARAHEWLRHAATAWC.

Residues 1 to 58 (MDLALLRTFVTVHRAGSFTRAAALLGLSQPAVTSQIRTLERQLGRPLFLRQARGVTPT) enclose the HTH lysR-type domain. A DNA-binding region (H-T-H motif) is located at residues 18 to 37 (FTRAAALLGLSQPAVTSQIR).

The protein belongs to the LysR transcriptional regulatory family.

Its function is as follows. Putative regulator that may be involved in stimulating antibiotic production in S.antibioticus. The chain is HTH-type transcriptional regulator AbaB from Streptomyces antibioticus.